A 400-amino-acid polypeptide reads, in one-letter code: MAKQKFERTKPHVNIGTIGHVDHGKTTLTAAITMVLATVGKAQVKKYDKIDNAPEERERGITINTAHVEYETEKRHYAHVDCPGHADYVKNMITGAAQMDGAILVVSAADGPMPQTREHILLARQVGVPYIVVYLNKADMVDDPELLELVDMEVRELLSTYEFPGDEIPIITGSALKAMECACGKRECEWCKSIWELMDAVDEYIPTPQRAVDKPFLMPVEDVFSITGRGTVATGRIERGQVKVGDEVEIVGLQDKPRKTVVTGVEMFRKILDVGVAGDNVGCLLRGVDRKEIERGQVLAKPGSIKPHKSFSAEVYVLTKEEGGRHTPFFNGYRPQFYFRTTDVTGVVKLPEGVEMVMPGDNVRIDIDLITPIAIEEGLRFAIREGGRTVGAGVVTGIRE.

The tr-type G domain occupies 10 to 209 (KPHVNIGTIG…AVDEYIPTPQ (200 aa)). Residues 19–26 (GHVDHGKT) form a G1 region. 19–26 (GHVDHGKT) contacts GTP. T26 lines the Mg(2+) pocket. A G2 region spans residues 60–64 (GITIN). The tract at residues 81–84 (DCPG) is G3. GTP contacts are provided by residues 81–85 (DCPGH) and 136–139 (NKAD). Residues 136-139 (NKAD) form a G4 region. The tract at residues 174–176 (SAL) is G5.

It belongs to the TRAFAC class translation factor GTPase superfamily. Classic translation factor GTPase family. EF-Tu/EF-1A subfamily. As to quaternary structure, monomer.

It is found in the cytoplasm. The catalysed reaction is GTP + H2O = GDP + phosphate + H(+). GTP hydrolase that promotes the GTP-dependent binding of aminoacyl-tRNA to the A-site of ribosomes during protein biosynthesis. In Pelotomaculum thermopropionicum (strain DSM 13744 / JCM 10971 / SI), this protein is Elongation factor Tu 2.